We begin with the raw amino-acid sequence, 821 residues long: Enhancer of polycomb-like protein 1 (821 aa).

Over residues 1–12 (MSSNGGSNTNER) the composition is skewed to polar residues. 3 disordered regions span residues 1–43 (MSSN…TRFR), 427–485 (KAAA…QPAM), and 779–799 (QFLQ…PINP). 2 stretches are compositionally biased toward low complexity: residues 18–39 (SGSL…DSGS) and 449–465 (EQAA…SSSQ). The span at 786 to 799 (ENGSPNNATMPINP) shows a compositional bias: polar residues.

It belongs to the enhancer of polycomb family. In terms of assembly, component of the NuA4 histone acetyltransferase complex.

The protein resides in the nucleus. Component of the NuA4 histone acetyltransferase complex which is involved in transcriptional activation of selected genes principally by acetylation of nucleosomal histone H4 and H2A. The NuA4 complex is also involved in DNA repair. Involved in gene silencing by neighboring heterochromatin, blockage of the silencing spreading along the chromosome, and required for cell cycle progression through G2/M. This Candida glabrata (strain ATCC 2001 / BCRC 20586 / JCM 3761 / NBRC 0622 / NRRL Y-65 / CBS 138) (Yeast) protein is Enhancer of polycomb-like protein 1 (EPL1).